Consider the following 418-residue polypeptide: Ig-like V-type domain-containing protein FAM187A (418 aa).

Positions 1–18 (MRLAPTTVLLWAWGSLQA) are cleaved as a signal peptide. Residues 19 to 376 (FEIVEKENIF…ASLSDPETRT (358 aa)) are Extracellular-facing. Residues 267 to 361 (PWVPQVPIQF…IAGFRLGVTS (95 aa)) enclose the Ig-like V-type domain. An intrachain disulfide couples Cys-289 to Cys-345. An N-linked (GlcNAc...) asparagine glycan is attached at Asn-317. A helical transmembrane segment spans residues 377-397 (AVELTLIGYLLIAVVFVTIHL). The Cytoplasmic segment spans residues 398-418 (CRCCCQSRCCPNFSAQTLLQL).

This sequence belongs to the FAM187 family.

It is found in the membrane. This is Ig-like V-type domain-containing protein FAM187A (Fam187a) from Rattus norvegicus (Rat).